The following is a 374-amino-acid chain: Eukaryotic translation initiation factor 3 subunit M (374 aa).

N-acetylserine is present on Ser2. Ser2 and Ser152 each carry phosphoserine. The PCI domain maps to 180–339; it reads AASKVMVELL…RKVVVSHSTH (160 aa). N6-acetyllysine is present on Lys254. Residues 344–374 are interaction with HSV-1 and HSV-2; the sequence is KQQWQQLYDTLNAWKQNLNKVKNSLLSLSDT. The residue at position 367 (Ser367) is a Phosphoserine.

Component of the eukaryotic translation initiation factor 3 (eIF-3) complex, which is composed of 13 subunits: EIF3A, EIF3B, EIF3C, EIF3D, EIF3E, EIF3F, EIF3G, EIF3H, EIF3I, EIF3J, EIF3K, EIF3L and EIF3M. The eIF-3 complex appears to include 3 stable modules: module A is composed of EIF3A, EIF3B, EIF3G and EIF3I; module B is composed of EIF3F, EIF3H, and EIF3M; and module C is composed of EIF3C, EIF3D, EIF3E, EIF3K and EIF3L. EIF3C of module C binds EIF3B of module A and EIF3H of module B, thereby linking the three modules. EIF3J is a labile subunit that binds to the eIF-3 complex via EIF3B. The eIF-3 complex interacts with RPS6KB1 under conditions of nutrient depletion. Mitogenic stimulation leads to binding and activation of a complex composed of MTOR and RPTOR, leading to phosphorylation and release of RPS6KB1 and binding of EIF4B to eIF-3. Broadly expressed.

The protein localises to the cytoplasm. Functionally, component of the eukaryotic translation initiation factor 3 (eIF-3) complex, which is required for several steps in the initiation of protein synthesis. The eIF-3 complex associates with the 40S ribosome and facilitates the recruitment of eIF-1, eIF-1A, eIF-2:GTP:methionyl-tRNAi and eIF-5 to form the 43S pre-initiation complex (43S PIC). The eIF-3 complex stimulates mRNA recruitment to the 43S PIC and scanning of the mRNA for AUG recognition. The eIF-3 complex is also required for disassembly and recycling of post-termination ribosomal complexes and subsequently prevents premature joining of the 40S and 60S ribosomal subunits prior to initiation. The eIF-3 complex specifically targets and initiates translation of a subset of mRNAs involved in cell proliferation, including cell cycling, differentiation and apoptosis, and uses different modes of RNA stem-loop binding to exert either translational activation or repression. Its function is as follows. (Microbial infection) May favor virus entry in case of infection with herpes simplex virus 1 (HSV1) or herpes simplex virus 2 (HSV2). The sequence is that of Eukaryotic translation initiation factor 3 subunit M from Homo sapiens (Human).